We begin with the raw amino-acid sequence, 600 residues long: CTP synthase (600 aa).

The 267-residue stretch at 304 to 570 (TIVLVGKYTH…IQSGEEVEWS (267 aa)) folds into the Glutamine amidotransferase type-1 domain. Residues Cys403, His532, and Glu534 each act as for GATase activity in the active site.

Belongs to the CTP synthase family.

It carries out the reaction UTP + L-glutamine + ATP + H2O = CTP + L-glutamate + ADP + phosphate + 2 H(+). It functions in the pathway pyrimidine metabolism; CTP biosynthesis via de novo pathway; CTP from UDP: step 2/2. Catalyzes the ATP-dependent amination of UTP to CTP with either L-glutamine or ammonia as the source of nitrogen. This Schizosaccharomyces pombe (strain 972 / ATCC 24843) (Fission yeast) protein is CTP synthase (ura7).